A 415-amino-acid polypeptide reads, in one-letter code: uncharacterized protein (415 aa).

Disordered regions lie at residues Lys329–Ser351 and Lys388–Leu415. Residues Leu338–Thr348 are compositionally biased toward acidic residues. Positions Lys399–Asn409 are enriched in basic residues.

This is an uncharacterized protein from Acanthamoeba polyphaga mimivirus (APMV).